The following is a 488-amino-acid chain: 3-octaprenyl-4-hydroxybenzoate carboxy-lyase (488 aa).

Asparagine 172 is a binding site for Mn(2+). Prenylated FMN is bound by residues 175 to 177 (IYR), 189 to 191 (RWL), and 194 to 195 (RG). Glutamate 238 lines the Mn(2+) pocket. Aspartate 287 functions as the Proton donor in the catalytic mechanism.

The protein belongs to the UbiD family. As to quaternary structure, homohexamer. The cofactor is prenylated FMN. Requires Mn(2+) as cofactor.

It is found in the cell membrane. The enzyme catalyses a 4-hydroxy-3-(all-trans-polyprenyl)benzoate + H(+) = a 2-(all-trans-polyprenyl)phenol + CO2. It functions in the pathway cofactor biosynthesis; ubiquinone biosynthesis. Its function is as follows. Catalyzes the decarboxylation of 3-octaprenyl-4-hydroxy benzoate to 2-octaprenylphenol, an intermediate step in ubiquinone biosynthesis. The chain is 3-octaprenyl-4-hydroxybenzoate carboxy-lyase from Legionella pneumophila subsp. pneumophila (strain Philadelphia 1 / ATCC 33152 / DSM 7513).